The sequence spans 203 residues: Small ribosomal subunit protein uS4 (203 aa).

The 64-residue stretch at 93–156 folds into the S4 RNA-binding domain; sequence QRLDNVVFRL…MKVPAILEAV (64 aa).

This sequence belongs to the universal ribosomal protein uS4 family. Part of the 30S ribosomal subunit. Contacts protein S5. The interaction surface between S4 and S5 is involved in control of translational fidelity.

Functionally, one of the primary rRNA binding proteins, it binds directly to 16S rRNA where it nucleates assembly of the body of the 30S subunit. In terms of biological role, with S5 and S12 plays an important role in translational accuracy. The chain is Small ribosomal subunit protein uS4 from Lactococcus lactis subsp. lactis (strain IL1403) (Streptococcus lactis).